The primary structure comprises 420 residues: Replication factor C large subunit (420 aa).

46 to 53 (GVQGSGKT) is a binding site for ATP.

It belongs to the activator 1 small subunits family. RfcL subfamily. Heteromultimer composed of small subunits (RfcS) and large subunits (RfcL).

Its function is as follows. Part of the RFC clamp loader complex which loads the PCNA sliding clamp onto DNA. The chain is Replication factor C large subunit from Thermoplasma volcanium (strain ATCC 51530 / DSM 4299 / JCM 9571 / NBRC 15438 / GSS1).